The sequence spans 212 residues: Regulatory protein RecX (212 aa).

Belongs to the RecX family.

It localises to the cytoplasm. Functionally, modulates RecA activity. The sequence is that of Regulatory protein RecX from Clostridium botulinum (strain Eklund 17B / Type B).